Consider the following 486-residue polypeptide: 2-succinylbenzoate--CoA ligase (486 aa).

It belongs to the ATP-dependent AMP-binding enzyme family. MenE subfamily.

The enzyme catalyses 2-succinylbenzoate + ATP + CoA = 2-succinylbenzoyl-CoA + AMP + diphosphate. It participates in quinol/quinone metabolism; 1,4-dihydroxy-2-naphthoate biosynthesis; 1,4-dihydroxy-2-naphthoate from chorismate: step 5/7. Its pathway is quinol/quinone metabolism; menaquinone biosynthesis. Its function is as follows. Converts 2-succinylbenzoate (OSB) to 2-succinylbenzoyl-CoA (OSB-CoA). This is 2-succinylbenzoate--CoA ligase from Bacillus pumilus (strain SAFR-032).